A 205-amino-acid chain; its full sequence is Nascent polypeptide-associated complex subunit alpha-like protein (205 aa).

2 disordered regions span residues 1–73 (MPSV…RKAM) and 137–166 (KAPNLSHVTMKPESSTAAQEDEDEVDDTGV). Residues 20–29 (EQQELEHSDE) show a composition bias toward basic and acidic residues. Acidic residues predominate over residues 30–51 (PILEDDEDDDDEEDDNDEDDAQ). Over residues 56 to 66 (GEGKSKQSRSE) the composition is skewed to basic and acidic residues. An NAC-A/B domain is found at 63–128 (SRSEKKCRKA…AKIEDLSSQL (66 aa)). The span at 155-165 (QEDEDEVDDTG) shows a compositional bias: acidic residues. The UBA domain occupies 166–203 (VEPKDIELVMTQAGVSRTKAVKALKAADGDIVSAIMDL).

Belongs to the NAC-alpha family.

Functionally, may promote appropriate targeting of ribosome-nascent polypeptide complexes. This Pinus taeda (Loblolly pine) protein is Nascent polypeptide-associated complex subunit alpha-like protein.